A 224-amino-acid polypeptide reads, in one-letter code: PKHD-type hydroxylase Shewmr7_0698 (224 aa).

The Fe2OG dioxygenase domain occupies 78 to 176 (QFYPPLFNRY…RTAAFMWLQS (99 aa)). Positions 96, 98, and 157 each coordinate Fe cation. Arg167 provides a ligand contact to 2-oxoglutarate.

It depends on Fe(2+) as a cofactor. L-ascorbate serves as cofactor.

The polypeptide is PKHD-type hydroxylase Shewmr7_0698 (Shewanella sp. (strain MR-7)).